The chain runs to 309 residues: Xylose/arabinose import permease protein XacI (309 aa).

A run of 6 helical transmembrane segments spans residues 29-49 (LVVF…MTAI), 89-109 (LIMS…AAYG), 121-141 (MLML…VPLA), 170-190 (ELVP…TILF), 227-247 (MFGV…LFAF), and 282-302 (AAFL…EQFA). Residues 85-297 (FFNSLIMSIP…VPTLILYVAF (213 aa)) form the ABC transmembrane type-1 domain.

Belongs to the binding-protein-dependent transport system permease family. The complex is composed of two ATP-binding proteins (XacJ and XacK), two transmembrane proteins (XacH and XacI) and a solute-binding protein (XacG).

It localises to the cell membrane. In terms of biological role, part of the ABC transporter complex XacGHIJK involved in the uptake of xylose and arabinose. Responsible for the translocation of the substrate across the membrane. The polypeptide is Xylose/arabinose import permease protein XacI (Haloferax volcanii (strain ATCC 29605 / DSM 3757 / JCM 8879 / NBRC 14742 / NCIMB 2012 / VKM B-1768 / DS2) (Halobacterium volcanii)).